Reading from the N-terminus, the 135-residue chain is Large ribosomal subunit protein uL16c (135 aa).

It belongs to the universal ribosomal protein uL16 family. Part of the 50S ribosomal subunit.

The protein resides in the plastid. Its subcellular location is the chloroplast. This is Large ribosomal subunit protein uL16c from Morus indica (Mulberry).